Reading from the N-terminus, the 138-residue chain is Putative pre-16S rRNA nuclease (138 aa).

This sequence belongs to the YqgF nuclease family.

Its subcellular location is the cytoplasm. Functionally, could be a nuclease involved in processing of the 5'-end of pre-16S rRNA. The chain is Putative pre-16S rRNA nuclease from Enterobacter sp. (strain 638).